A 640-amino-acid chain; its full sequence is Zinc finger and BTB domain-containing protein 22 (640 aa).

In terms of domain architecture, BTB spans 57–121 (CDVSIRVQGR…AYTGRLSMAA (65 aa)). 3 disordered regions span residues 191-244 (RSHA…PVFP), 308-327 (PAPA…EEED), and 332-482 (CEDD…GGTG). Residues 192-210 (SHASSRASENQSPSSSNYF) show a composition bias toward polar residues. Residue S203 is modified to Phosphoserine. Residues 318 to 327 (PDLEEDEEED) show a composition bias toward acidic residues. Residues 431–442 (SSSSSSSSSSSS) are compositionally biased toward low complexity. Residues 469 to 482 (GMPGGPGGTPGGTG) show a composition bias toward gly residues. A C2H2-type 1; atypical zinc finger spans residues 490 to 511 (FLCHCGKAFSHKSMRDRHVNMH). C2H2-type zinc fingers lie at residues 517-539 (FDCP…MKTH) and 545-571 (YECG…ERRH). Positions 571-640 (HRLVGGGGGG…MGFGGGGGTN (70 aa)) are disordered. Gly residues predominate over residues 574-588 (VGGGGGGGPGPGGPT).

Belongs to the krueppel C2H2-type zinc-finger protein family.

It localises to the nucleus. In terms of biological role, may be involved in transcriptional regulation. In Canis lupus familiaris (Dog), this protein is Zinc finger and BTB domain-containing protein 22 (ZBTB22).